The primary structure comprises 367 residues: MSDSQTLVVKLGTSVLTGGSRRLNRAHIVELVRQCAQLHAAGHRIVIVTSGAIAAGREHLGYPELPATIASKQLLAAVGQSRLIQLWEQLFSIYGIHIGQMLLTRADMEDRERFLNARDTLRALLDNHIVPVINENDAVATAEIKVGDNDNLSALAAILAGADKLLLLTDQQGLFTADPRSNPQAELIKDVYGVDDALRSIAGDSVSGLGIGGMSTKLQAADVACRAGIDTIIASGSKPGVIGDVMEGISVGTRFHAQASPLENRKRWIFGAPPAGEITVDEGATAAMLERGSSLLPKGIKSVTGNFSRGEVIRICNLQGRDIAHGVSRYNSDALRRIAGHHSQQIDAILGYEYGPVAVHRDDMITR.

K10 contributes to the ATP binding site. S50, D137, and N149 together coordinate substrate. 169 to 170 lines the ATP pocket; that stretch reads TD. Residues 275 to 353 form the PUA domain; sequence AGEITVDEGA…QQIDAILGYE (79 aa).

It belongs to the glutamate 5-kinase family.

The protein resides in the cytoplasm. It catalyses the reaction L-glutamate + ATP = L-glutamyl 5-phosphate + ADP. It participates in amino-acid biosynthesis; L-proline biosynthesis; L-glutamate 5-semialdehyde from L-glutamate: step 1/2. Catalyzes the transfer of a phosphate group to glutamate to form L-glutamate 5-phosphate. The sequence is that of Glutamate 5-kinase from Salmonella paratyphi B (strain ATCC BAA-1250 / SPB7).